The following is a 432-amino-acid chain: Nuclear pore complex-interacting protein family member B8 (432 aa).

Disordered stretches follow at residues 260–280 and 353–420; these read RMGR…NSLS and SPLP…LRTR. Polar residues predominate over residues 270–280; the sequence is QQHSITDNSLS. Residues 374–402 show a composition bias toward basic and acidic residues; it reads EVEKPPKPKRWRVDEVEQSPKPKRQREAE. The span at 408-420 shows a compositional bias: basic residues; sequence KPKRRRLSKLRTR.

It belongs to the NPIP family.

This chain is Nuclear pore complex-interacting protein family member B8 (NPIPB8), found in Homo sapiens (Human).